A 181-amino-acid chain; its full sequence is CAPA peptides (181 aa).

The N-terminal stretch at 1–22 (MQDNRFFILMILLVFSTSLNQG) is a signal peptide. Positions 23–29 (QKLKAND) are excised as a propeptide. At isoleucine 41 the chain carries Isoleucine amide. The propeptide occupies 44 to 54 (NSEISSFSRSE). Isoleucine amide is present on isoleucine 65. Positions 68–181 (SDVSSFDNLN…ENERDTANFL (114 aa)) are excised as a propeptide. The segment at 159–181 (TQGQGGYTPRLGRENERDTANFL) is disordered. Positions 169 to 181 (LGRENERDTANFL) are enriched in basic and acidic residues.

A pyrokinin potentially constituted by residues Asn-158 to Gly-170 has so far not been detected and might be completely absent in ants. As to expression, periviscerokinin 1 and 2 are expressed in central brain, antennal lobes and gnathal, thoracic and abominal ganglia. Periviscerokinin 2 is also expressed in the retrocerebral complex (at protein level).

It localises to the secreted. In terms of biological role, periviscerokinins mediate visceral muscle contractile activity (myotropic activity). This chain is CAPA peptides, found in Camponotus floridanus (Florida carpenter ant).